The primary structure comprises 156 residues: MPRKGPAPKRPLVLDPVYGSPLVTQLINKILVDGKKSTAERIVYGALEGAREKSGGDPVAALKKAMENIKPSLEVKSRRVGGATYQVPVEVKPGRATALALRWLVGYSKARREKTMTERLRNEILDACNGLGAAVKRREDTHKMAEANRAFAHYRW.

It belongs to the universal ribosomal protein uS7 family. As to quaternary structure, part of the 30S ribosomal subunit. Contacts proteins S9 and S11.

One of the primary rRNA binding proteins, it binds directly to 16S rRNA where it nucleates assembly of the head domain of the 30S subunit. Is located at the subunit interface close to the decoding center, probably blocks exit of the E-site tRNA. The polypeptide is Small ribosomal subunit protein uS7 (Renibacterium salmoninarum (strain ATCC 33209 / DSM 20767 / JCM 11484 / NBRC 15589 / NCIMB 2235)).